Reading from the N-terminus, the 627-residue chain is Carene synthase, chloroplastic (627 aa).

The transit peptide at 1 to 36 (MSVISILPLASKSCLYKSLMSSTHELKALCRPIATL) directs the protein to the chloroplast. Residues aspartate 378, aspartate 382, and aspartate 530 each contribute to the Mg(2+) site. The short motif at 378–382 (DDMYD) is the DDXXD motif element.

This sequence belongs to the terpene synthase family. Tpsd subfamily. Mg(2+) is required as a cofactor. The cofactor is Mn(2+).

It is found in the plastid. The protein localises to the chloroplast. It carries out the reaction (2E)-geranyl diphosphate = (+)-car-3-ene + diphosphate. It participates in terpene metabolism; oleoresin biosynthesis. Terpene synthase (TPS) involved in defensive oleoresin formation in conifers in response to insect attack or other injury. This Picea abies (Norway spruce) protein is Carene synthase, chloroplastic (JF67).